The following is a 216-amino-acid chain: Calcium-binding protein 2 (216 aa).

Positions 1-41 (MGNCAKTPWHRGSKERWQWPGSPLGGSRPSPGPRTEEQEGT) are disordered. Residue glycine 2 is the site of N-myristoyl glycine attachment. Residues 20–29 (PGSPLGGSRP) are compositionally biased toward low complexity. EF-hand domains lie at 74-109 (EEIE…LGYM), 125-142 (GKVD…KLLA), 148-183 (IGVR…LLGE), and 185-216 (LSQR…MMSR). The Ca(2+) site is built by aspartate 87, aspartate 89, aspartate 91, tyrosine 93, and glutamate 98. Positions 161, 163, 165, 167, 172, 198, 200, 202, and 209 each coordinate Ca(2+).

Expressed in the inner hair cells (IHCs), outer hair cells,(OHCs) and vestibular hair cells within the ear and in the retina (at protein level). Expressed in the retinal cone type 6 ON-bipolar cells and type 1 OFF-bipolar cells (at protein level). Expressed in the organ of Corti and spiral ganglion neurons in the cochlea (at protein level).

It is found in the cytoplasm. The protein resides in the perinuclear region. The protein localises to the cell membrane. It localises to the golgi apparatus. In terms of biological role, required for sound encoding at inner hair cells (IHCs) synapses, likely via inhibition of the inactivation of voltage-gated calcium channel of type 1.3 (Cav1.3) in the IHCs. Required for the normal transfer of light signals through the retina. The chain is Calcium-binding protein 2 (Cabp2) from Mus musculus (Mouse).